Here is a 305-residue protein sequence, read N- to C-terminus: 2-methoxy-6-polyprenyl-1,4-benzoquinol methylase, mitochondrial (305 aa).

The N-terminal 34 residues, Met1 to Tyr34, are a transit peptide targeting the mitochondrion. S-adenosyl-L-methionine-binding positions include Thr117, Asp143, and Asn173 to Ala174.

This sequence belongs to the class I-like SAM-binding methyltransferase superfamily. MenG/UbiE family. As to quaternary structure, component of a multi-subunit COQ enzyme complex, composed of at least COQ3, COQ4, COQ5, COQ6, COQ7 and COQ9.

The protein resides in the mitochondrion inner membrane. It carries out the reaction 2-methoxy-6-(all-trans-decaprenyl)benzene-1,4-diol + S-adenosyl-L-methionine = 5-methoxy-2-methyl-3-(all-trans-decaprenyl)benzene-1,4-diol + S-adenosyl-L-homocysteine + H(+). Its pathway is cofactor biosynthesis; ubiquinone biosynthesis. In terms of biological role, methyltransferase required for the conversion of 2-decaprenyl-6-methoxy-1,4-benzoquinol (DDMQH2) to 2-decaprenyl-3-methyl-6-methoxy-1,4-benzoquinol (DMQH2). In Schizosaccharomyces pombe (strain 972 / ATCC 24843) (Fission yeast), this protein is 2-methoxy-6-polyprenyl-1,4-benzoquinol methylase, mitochondrial.